Here is a 226-residue protein sequence, read N- to C-terminus: Adenosine 5'-phosphosulfate reductase (226 aa).

[4Fe-4S] cluster contacts are provided by Cys-112, Cys-113, Cys-195, and Cys-198. Cys-221 serves as the catalytic Nucleophile; cysteine thiosulfonate intermediate.

The protein belongs to the PAPS reductase family. CysH subfamily. The cofactor is [4Fe-4S] cluster.

It is found in the cytoplasm. It carries out the reaction [thioredoxin]-disulfide + sulfite + AMP + 2 H(+) = adenosine 5'-phosphosulfate + [thioredoxin]-dithiol. It functions in the pathway sulfur metabolism; hydrogen sulfide biosynthesis; sulfite from sulfate. Catalyzes the formation of sulfite from adenosine 5'-phosphosulfate (APS) using thioredoxin as an electron donor. This chain is Adenosine 5'-phosphosulfate reductase, found in Bacillus anthracis (strain A0248).